A 71-amino-acid chain; its full sequence is Plasticin-C1 (71 aa).

A signal peptide spans 1-22; it reads MAFLKKSLLLVLFLGLVSLSIC. Residues 23–45 constitute a propeptide that is removed on maturation; it reads EEEKRENEDEEKQEDDDQSENKR. Positions 25–46 are disordered; sequence EKRENEDEEKQEDDDQSENKRG. Acidic residues predominate over residues 30–40; sequence EDEEKQEDDDQ. N68 carries the asparagine amide modification. Residues 70–71 constitute a propeptide that is removed on maturation; the sequence is ES.

This sequence belongs to the frog skin active peptide (FSAP) family. Plasticin subfamily. In terms of tissue distribution, expressed by the skin glands.

It localises to the secreted. The protein localises to the target cell membrane. Neutral peptide with no antimicrobial activity. May act in synergy with cationic peptides by enhancing their activity. Has a moderate hemolytic activity. This Agalychnis callidryas (Red-eyed tree frog) protein is Plasticin-C1.